Here is a 95-residue protein sequence, read N- to C-terminus: Large ribosomal subunit protein uL23 (95 aa).

It belongs to the universal ribosomal protein uL23 family. In terms of assembly, part of the 50S ribosomal subunit. Contacts protein L29, and trigger factor when it is bound to the ribosome.

Its function is as follows. One of the early assembly proteins it binds 23S rRNA. One of the proteins that surrounds the polypeptide exit tunnel on the outside of the ribosome. Forms the main docking site for trigger factor binding to the ribosome. This Bacillus pumilus (strain SAFR-032) protein is Large ribosomal subunit protein uL23.